A 140-amino-acid polypeptide reads, in one-letter code: Hemoglobin subunit alpha (140 aa).

Positions 1-140 (LSAADKGHVK…VSTVLTSKYR (140 aa)) constitute a Globin domain. S2 is subject to Phosphoserine. Residues K6 and K10 each carry the N6-succinyllysine modification. The residue at position 15 (K15) is an N6-acetyllysine; alternate. K15 is modified (N6-succinyllysine; alternate). Y23 carries the phosphotyrosine modification. Phosphoserine is present on S34. The residue at position 39 (K39) is an N6-succinyllysine. Residue S48 is modified to Phosphoserine. H57 provides a ligand contact to O2. H86 provides a ligand contact to heme b. S101 carries the post-translational modification Phosphoserine. T107 carries the phosphothreonine modification. S123 is subject to Phosphoserine. A phosphothreonine mark is found at T133 and T136. A Phosphoserine modification is found at S137.

Belongs to the globin family. In terms of assembly, heterotetramer of two alpha chains and two beta chains. Red blood cells.

Its function is as follows. Involved in oxygen transport from the lung to the various peripheral tissues. Functionally, hemopressin acts as an antagonist peptide of the cannabinoid receptor CNR1. Hemopressin-binding efficiently blocks cannabinoid receptor CNR1 and subsequent signaling. This Tragelaphus strepsiceros (Greater kudu) protein is Hemoglobin subunit alpha (HBA).